The following is a 180-amino-acid chain: Alkyl hydroperoxide reductase AhpD (180 aa).

Cys-131 functions as the Proton donor in the catalytic mechanism. Cys-131 and Cys-134 are joined by a disulfide. The active-site Cysteine sulfenic acid (-SOH) intermediate is Cys-134.

Belongs to the AhpD family.

It carries out the reaction N(6)-[(R)-dihydrolipoyl]-L-lysyl-[lipoyl-carrier protein] + a hydroperoxide = N(6)-[(R)-lipoyl]-L-lysyl-[lipoyl-carrier protein] + an alcohol + H2O. Its function is as follows. Antioxidant protein with alkyl hydroperoxidase activity. Required for the reduction of the AhpC active site cysteine residues and for the regeneration of the AhpC enzyme activity. This Hyphomonas neptunium (strain ATCC 15444) protein is Alkyl hydroperoxide reductase AhpD.